The chain runs to 118 residues: MTKNIHDVAYELQKAIAENEDFKTLKESYAAVQADTASKNLFDEFRTMQLSLQQKMMQGQEITEEDNQQAQEVVARIQQDAKITKLMETEQRLNVVIGDVNKIIMKPLEELYSAQQQA.

It belongs to the UPF0342 family.

This is UPF0342 protein BC_0880 from Bacillus cereus (strain ATCC 14579 / DSM 31 / CCUG 7414 / JCM 2152 / NBRC 15305 / NCIMB 9373 / NCTC 2599 / NRRL B-3711).